The sequence spans 88 residues: UPF0335 protein WD_0557 (88 aa).

This sequence belongs to the UPF0335 family.

The chain is UPF0335 protein WD_0557 from Wolbachia pipientis wMel.